A 270-amino-acid chain; its full sequence is Carboxy-terminal domain RNA polymerase II polypeptide A small phosphatase 2 (270 aa).

At serine 5 the chain carries Phosphoserine. The FCP1 homology domain occupies 96-254 (QDQGRICVVI…LNLIPVFEEL (159 aa)). The active-site 4-aspartylphosphate intermediate is the aspartate 106. Mg(2+)-binding residues include aspartate 106, aspartate 108, and asparagine 217. Aspartate 108 serves as the catalytic Proton donor.

Monomer. Interacts with REST. The cofactor is Mg(2+). As to expression, expression is restricted to non-neuronal tissues.

The protein localises to the nucleus. It catalyses the reaction O-phospho-L-seryl-[protein] + H2O = L-seryl-[protein] + phosphate. The enzyme catalyses O-phospho-L-threonyl-[protein] + H2O = L-threonyl-[protein] + phosphate. Its function is as follows. Preferentially catalyzes the dephosphorylation of 'Ser-5' within the tandem 7 residue repeats in the C-terminal domain (CTD) of the largest RNA polymerase II subunit POLR2A. Negatively regulates RNA polymerase II transcription, possibly by controlling the transition from initiation/capping to processive transcript elongation. Recruited by REST to neuronal genes that contain RE-1 elements, leading to neuronal gene silencing in non-neuronal cells. The sequence is that of Carboxy-terminal domain RNA polymerase II polypeptide A small phosphatase 2 (Ctdsp2) from Mus musculus (Mouse).